We begin with the raw amino-acid sequence, 249 residues long: Tumor necrosis factor ligand superfamily member 12 (249 aa).

The Cytoplasmic segment spans residues 1–21 (MAARRSQRRRGRRGEPGTALL). A helical; Signal-anchor for type II membrane protein transmembrane segment spans residues 22–42 (VPLALGLGLALACLGLLLAVV). The Extracellular segment spans residues 43-249 (SLGSRASLSA…LTYFGLFQVH (207 aa)). The tract at residues 55 to 85 (PAQEELVAEEDQDPSELNPQTEESQDPAPFL) is disordered. Acidic residues predominate over residues 56–68 (AQEELVAEEDQDP). Residues 107–248 (IAAHYEVHPR…FLTYFGLFQV (142 aa)) form the THD domain. N-linked (GlcNAc...) asparagine glycosylation occurs at asparagine 139. Cysteine 191 and cysteine 210 are oxidised to a cystine.

This sequence belongs to the tumor necrosis factor family. As to quaternary structure, homotrimer. Interacts with the angiogenic factor AGGF1/VG5Q. In terms of processing, the soluble form derives from the membrane form by proteolytic processing. As to expression, highly expressed in adult heart, pancreas, skeletal muscle, brain, colon, small intestine, lung, ovary, prostate, spleen, lymph node, appendix and peripheral blood lymphocytes. Low expression in kidney, testis, liver, placenta, thymus and bone marrow. Also detected in fetal kidney, liver, lung and brain.

It localises to the cell membrane. It is found in the secreted. In terms of biological role, binds to FN14 and possibly also to TNRFSF12/APO3. Weak inducer of apoptosis in some cell types. Mediates NF-kappa-B activation. Promotes angiogenesis and the proliferation of endothelial cells. Also involved in induction of inflammatory cytokines. Promotes IL8 secretion. The chain is Tumor necrosis factor ligand superfamily member 12 (TNFSF12) from Homo sapiens (Human).